The following is a 370-amino-acid chain: DNA replication and repair protein RecF (370 aa).

30 to 37 (GDNGSGKT) lines the ATP pocket.

It belongs to the RecF family.

Its subcellular location is the cytoplasm. In terms of biological role, the RecF protein is involved in DNA metabolism; it is required for DNA replication and normal SOS inducibility. RecF binds preferentially to single-stranded, linear DNA. It also seems to bind ATP. This chain is DNA replication and repair protein RecF, found in Stutzerimonas stutzeri (strain A1501) (Pseudomonas stutzeri).